A 126-amino-acid chain; its full sequence is Holo-[acyl-carrier-protein] synthase (126 aa).

Positions 9 and 58 each coordinate Mg(2+).

This sequence belongs to the P-Pant transferase superfamily. AcpS family. Mg(2+) is required as a cofactor.

Its subcellular location is the cytoplasm. The catalysed reaction is apo-[ACP] + CoA = holo-[ACP] + adenosine 3',5'-bisphosphate + H(+). Functionally, transfers the 4'-phosphopantetheine moiety from coenzyme A to a Ser of acyl-carrier-protein. In Vibrio vulnificus (strain CMCP6), this protein is Holo-[acyl-carrier-protein] synthase.